A 418-amino-acid polypeptide reads, in one-letter code: Voltage-gated ClC-type chloride channel ClcB (418 aa).

Met1 is a topological domain (cytoplasmic). Residues 2–22 traverse the membrane as a helical segment; it reads FHRLLIATVVGILAAFAVAGF. Residues 23–53 are Periplasmic-facing; it reads RHAMLLLEWLFLNNDSGSLVNAATNLSPWRR. The helical transmembrane segment at 54 to 74 threads the bilayer; it reads LLTPALGGLAAGLLLMGWQKF. Topologically, residues 75–145 are cytoplasmic; the sequence is TQQRPHAPTD…QRFTPRQEWK (71 aa). The chain crosses the membrane as a helical span at residues 146–166; the sequence is LWIACGAAAGMAAAYRAPLAG. Residues 167–177 lie on the Periplasmic side of the membrane; the sequence is SLFIAEVLFGT. Residues 178–200 form a helical membrane-spanning segment; that stretch reads MMLASLGPVIISAVVALLVSNLI. The Cytoplasmic portion of the chain corresponds to 201 to 221; sequence NHSDALLYNVQLSVTVQARDY. A helical transmembrane segment spans residues 222-242; sequence ALIISTGVLAGLCGPLLLTLM. The Periplasmic segment spans residues 243–257; sequence NACHRGFVSLKLAPP. Residues 258-278 form a helical membrane-spanning segment; the sequence is WQLALGGLIVGLLSLFTPAVW. Over 279–290 the chain is Cytoplasmic; the sequence is GNGYSTVQSFLT. Residues 291-311 form a helical membrane-spanning segment; that stretch reads APPLLMIIAGIFLCKLCAVLA. At 312 to 315 the chain is on the periplasmic side; the sequence is SSGS. Residues 316–336 traverse the membrane as a helical segment; sequence GAPGGVFTPTLFIGLAIGMLY. The Cytoplasmic segment spans residues 337–351; sequence GRSLGLWFPDGEEIT. The chain crosses the membrane as a helical span at residues 352–372; the sequence is LLLGLTGMATLLAATTHAPIM. The Periplasmic portion of the chain corresponds to 373-379; the sequence is STLMICE. A helical membrane pass occupies residues 380-400; it reads MTGEYQLLPGLLIACVIASVI. At 401–418 the chain is on the cytoplasmic side; sequence SRTLHRDSIYRQHTAQHS.

Belongs to the chloride channel (TC 2.A.49) family. ClcB subfamily.

The protein resides in the cell inner membrane. In terms of biological role, probably acts as an electrical shunt for an outwardly-directed proton pump that is linked to amino acid decarboxylation, as part of the extreme acid resistance (XAR) response. The protein is Voltage-gated ClC-type chloride channel ClcB (clcB) of Escherichia coli (strain K12).